The chain runs to 95 residues: Sec-independent protein translocase protein TatA (95 aa).

The chain crosses the membrane as a helical span at residues 1–21; the sequence is MGGISIWQLLIIALIVVLLFG. Positions 50 to 61 are enriched in basic and acidic residues; that stretch reads KALEDNAADKPA. The disordered stretch occupies residues 50–95; that stretch reads KALEDNAADKPAADAAKVTETAKVAETAPVAETAEKKAESKGKEQA. A compositionally biased stretch (low complexity) spans 62–81; sequence ADAAKVTETAKVAETAPVAE. Residues 82–95 are compositionally biased toward basic and acidic residues; the sequence is TAEKKAESKGKEQA.

It belongs to the TatA/E family. As to quaternary structure, the Tat system comprises two distinct complexes: a TatABC complex, containing multiple copies of TatA, TatB and TatC subunits, and a separate TatA complex, containing only TatA subunits. Substrates initially bind to the TatABC complex, which probably triggers association of the separate TatA complex to form the active translocon.

The protein localises to the cell inner membrane. Functionally, part of the twin-arginine translocation (Tat) system that transports large folded proteins containing a characteristic twin-arginine motif in their signal peptide across membranes. TatA could form the protein-conducting channel of the Tat system. This Shewanella halifaxensis (strain HAW-EB4) protein is Sec-independent protein translocase protein TatA.